The chain runs to 267 residues: Tryptophan synthase alpha chain (267 aa).

Residues Glu49 and Asp60 each act as proton acceptor in the active site.

The protein belongs to the TrpA family. In terms of assembly, tetramer of two alpha and two beta chains.

The catalysed reaction is (1S,2R)-1-C-(indol-3-yl)glycerol 3-phosphate + L-serine = D-glyceraldehyde 3-phosphate + L-tryptophan + H2O. The protein operates within amino-acid biosynthesis; L-tryptophan biosynthesis; L-tryptophan from chorismate: step 5/5. The alpha subunit is responsible for the aldol cleavage of indoleglycerol phosphate to indole and glyceraldehyde 3-phosphate. The polypeptide is Tryptophan synthase alpha chain (Salinispora arenicola (strain CNS-205)).